The chain runs to 700 residues: Elongation factor G (700 aa).

Positions 8–290 (DRYRNVGIMA…AMIMYMPSPL (283 aa)) constitute a tr-type G domain. Residues 17–24 (AHIDAGKT), 88–92 (DTPGH), and 142–145 (NKMD) contribute to the GTP site.

This sequence belongs to the TRAFAC class translation factor GTPase superfamily. Classic translation factor GTPase family. EF-G/EF-2 subfamily.

The protein resides in the cytoplasm. In terms of biological role, catalyzes the GTP-dependent ribosomal translocation step during translation elongation. During this step, the ribosome changes from the pre-translocational (PRE) to the post-translocational (POST) state as the newly formed A-site-bound peptidyl-tRNA and P-site-bound deacylated tRNA move to the P and E sites, respectively. Catalyzes the coordinated movement of the two tRNA molecules, the mRNA and conformational changes in the ribosome. This chain is Elongation factor G, found in Vesicomyosocius okutanii subsp. Calyptogena okutanii (strain HA).